The following is a 451-amino-acid chain: Exodeoxyribonuclease 7 large subunit (451 aa).

The protein belongs to the XseA family. Heterooligomer composed of large and small subunits.

It localises to the cytoplasm. The enzyme catalyses Exonucleolytic cleavage in either 5'- to 3'- or 3'- to 5'-direction to yield nucleoside 5'-phosphates.. In terms of biological role, bidirectionally degrades single-stranded DNA into large acid-insoluble oligonucleotides, which are then degraded further into small acid-soluble oligonucleotides. The sequence is that of Exodeoxyribonuclease 7 large subunit from Thiobacillus denitrificans (strain ATCC 25259 / T1).